The primary structure comprises 482 residues: Glutamate--tRNA ligase (482 aa).

A 'HIGH' region motif is present at residues P9 to G19. The short motif at K252 to R256 is the 'KMSKS' region element. K255 is an ATP binding site.

The protein belongs to the class-I aminoacyl-tRNA synthetase family. Glutamate--tRNA ligase type 1 subfamily. Monomer.

The protein resides in the cytoplasm. It carries out the reaction tRNA(Glu) + L-glutamate + ATP = L-glutamyl-tRNA(Glu) + AMP + diphosphate. Its function is as follows. Catalyzes the attachment of glutamate to tRNA(Glu) in a two-step reaction: glutamate is first activated by ATP to form Glu-AMP and then transferred to the acceptor end of tRNA(Glu). The sequence is that of Glutamate--tRNA ligase from Ureaplasma parvum serovar 3 (strain ATCC 27815 / 27 / NCTC 11736).